The chain runs to 374 residues: WAT1-related protein At1g60050 (374 aa).

The next 10 membrane-spanning stretches (helical) occupy residues 11-31, 42-62, 82-102, 107-127, 145-165, 194-214, 228-248, 255-275, 292-312, and 315-335; these read IVPF…TILA, FVFI…YSFY, IFLL…LGLS, IVVC…SLAL, IGTL…GPFI, WALG…WNII, VVSA…AFME, ELKL…GSII, VPLF…SFFV, and LHYG…LIMW. The EamA domain maps to 26 to 155; it reads ALTILAKTAL…GTLICFTGAF (130 aa).

It belongs to the drug/metabolite transporter (DMT) superfamily. Plant drug/metabolite exporter (P-DME) (TC 2.A.7.4) family.

It localises to the membrane. The polypeptide is WAT1-related protein At1g60050 (Arabidopsis thaliana (Mouse-ear cress)).